A 371-amino-acid polypeptide reads, in one-letter code: 3-isopropylmalate dehydrogenase (371 aa).

Residue 77–90 participates in NAD(+) binding; sequence GPKWDDNPPHLRPE. Residues Arg97, Arg107, Arg135, and Asp224 each coordinate substrate. Positions 224, 248, and 252 each coordinate Mg(2+). An NAD(+)-binding site is contributed by 282–294; it reads GSAPDIAGMNKAN.

This sequence belongs to the isocitrate and isopropylmalate dehydrogenases family. LeuB type 1 subfamily. In terms of assembly, homodimer. Requires Mg(2+) as cofactor. It depends on Mn(2+) as a cofactor.

The protein localises to the cytoplasm. It catalyses the reaction (2R,3S)-3-isopropylmalate + NAD(+) = 4-methyl-2-oxopentanoate + CO2 + NADH. It functions in the pathway amino-acid biosynthesis; L-leucine biosynthesis; L-leucine from 3-methyl-2-oxobutanoate: step 3/4. In terms of biological role, catalyzes the oxidation of 3-carboxy-2-hydroxy-4-methylpentanoate (3-isopropylmalate) to 3-carboxy-4-methyl-2-oxopentanoate. The product decarboxylates to 4-methyl-2 oxopentanoate. The polypeptide is 3-isopropylmalate dehydrogenase (Geobacillus kaustophilus (strain HTA426)).